A 121-amino-acid polypeptide reads, in one-letter code: Small ribosomal subunit protein uS13 (121 aa).

The disordered stretch occupies residues 94-121; sequence GLPVRGQNTKNNARTRKGKAVAIAGKKK. Basic residues predominate over residues 106-121; the sequence is ARTRKGKAVAIAGKKK.

Belongs to the universal ribosomal protein uS13 family. In terms of assembly, part of the 30S ribosomal subunit. Forms a loose heterodimer with protein S19. Forms two bridges to the 50S subunit in the 70S ribosome.

Located at the top of the head of the 30S subunit, it contacts several helices of the 16S rRNA. In the 70S ribosome it contacts the 23S rRNA (bridge B1a) and protein L5 of the 50S subunit (bridge B1b), connecting the 2 subunits; these bridges are implicated in subunit movement. Contacts the tRNAs in the A and P-sites. This Streptococcus sanguinis (strain SK36) protein is Small ribosomal subunit protein uS13.